The sequence spans 376 residues: MSSETLKFARELISRPSITPEDEGCQQLIGERLAAQGFNLESMIFEDTTNLWARRGQGRKLFCFAGHTDVVPPGDINDWQFPPFEPTTHEGYLYGRGAADMKGSLAAMITATERFIKDYPNVDADIGFLITSDEEGPFINGTKRVIETLQERNENIDWCIVGEPSSTDTLGDIVKNGRRGSLTGDLTVLGIQGHVAYPHLAKNPVHDLAPALSELINEEWDQGNASFPPTTFQVSNIQAGTGAGNVIPGRIDTQFNFRFSTELTAEKIKQRVEAILDKHSLKYHLQWKLNGPPFLTESGALVEAVQAAIEHECGFSTTLSTAGGTSDGRFIAPTGAQVIELGPVNATIHKVNECVKISDLDKLSDVYYRCLEKLLC.

H67 lines the Zn(2+) pocket. The active site involves D69. A Zn(2+)-binding site is contributed by D100. E134 serves as the catalytic Proton acceptor. Residues E135, E163, and H349 each coordinate Zn(2+).

It belongs to the peptidase M20A family. DapE subfamily. As to quaternary structure, homodimer. Zn(2+) is required as a cofactor. The cofactor is Co(2+).

The enzyme catalyses N-succinyl-(2S,6S)-2,6-diaminopimelate + H2O = (2S,6S)-2,6-diaminopimelate + succinate. It functions in the pathway amino-acid biosynthesis; L-lysine biosynthesis via DAP pathway; LL-2,6-diaminopimelate from (S)-tetrahydrodipicolinate (succinylase route): step 3/3. Catalyzes the hydrolysis of N-succinyl-L,L-diaminopimelic acid (SDAP), forming succinate and LL-2,6-diaminopimelate (DAP), an intermediate involved in the bacterial biosynthesis of lysine and meso-diaminopimelic acid, an essential component of bacterial cell walls. This Idiomarina loihiensis (strain ATCC BAA-735 / DSM 15497 / L2-TR) protein is Succinyl-diaminopimelate desuccinylase.